The sequence spans 551 residues: Palmdelphin (551 aa).

N-acetylmethionine is present on Met1. A coiled-coil region spans residues 12–106 (QAITDKRKIQ…LQISANEEVI (95 aa)). Lys125 participates in a covalent cross-link: Glycyl lysine isopeptide (Lys-Gly) (interchain with G-Cter in SUMO2). Residues Ser135 and Ser163 each carry the phosphoserine modification. Lys178 is covalently cross-linked (Glycyl lysine isopeptide (Lys-Gly) (interchain with G-Cter in SUMO1); alternate). Lys178 is covalently cross-linked (Glycyl lysine isopeptide (Lys-Gly) (interchain with G-Cter in SUMO2); alternate). The segment covering 247–258 (ERNSKSPTEYHE) has biased composition (basic and acidic residues). Residues 247-267 (ERNSKSPTEYHEPVYANPFCR) are disordered. A Phosphothreonine modification is found at Thr270. Disordered regions lie at residues 298-387 (HESE…CSSP) and 452-536 (EDDE…DPSL). Residues Ser322, Ser350, Ser371, Ser376, Ser385, and Ser386 each carry the phosphoserine modification. The segment covering 484–495 (KRSEVSPHENTN) has biased composition (basic and acidic residues). Ser498, Ser515, and Ser520 each carry phosphoserine.

This sequence belongs to the paralemmin family. Interacts with GLUL. Phosphorylated. Expressed in the brain and the spinal cord. Expressed in the anterior olfactory nucleus, the olfactory tubercle, the nucleus supraopticus, the nucleus of the lateral olfactory tract, the piriform cortex, the cortico-amygdaloid transition zone, the septofimbrial nucleus and the indusium griseum (at protein level).

The protein resides in the cytoplasm. It localises to the cell projection. The protein localises to the dendrite. It is found in the dendritic spine. In Rattus norvegicus (Rat), this protein is Palmdelphin (Palmd).